Consider the following 322-residue polypeptide: Ferredoxin--NADP reductase (322 aa).

Residues Asp33, Gln41, Tyr46, Ala86, Phe120, Asp278, and Ser319 each coordinate FAD.

The protein belongs to the ferredoxin--NADP reductase type 2 family. Homodimer. The cofactor is FAD.

It catalyses the reaction 2 reduced [2Fe-2S]-[ferredoxin] + NADP(+) + H(+) = 2 oxidized [2Fe-2S]-[ferredoxin] + NADPH. The polypeptide is Ferredoxin--NADP reductase (Salinispora tropica (strain ATCC BAA-916 / DSM 44818 / JCM 13857 / NBRC 105044 / CNB-440)).